The chain runs to 74 residues: U3-agatoxin-Ao1f (74 aa).

The signal sequence occupies residues 1–20 (MRAIISLLLISTMVFGVIEA). The propeptide occupies 21–34 (VSLEEGLKIFEGER). Cystine bridges form between cysteine 37–cysteine 53, cysteine 44–cysteine 58, cysteine 52–cysteine 68, and cysteine 60–cysteine 66. An Asparagine amide modification is found at asparagine 72.

Belongs to the neurotoxin 07 (Beta/delta-agtx) family. 03 (aga-4) subfamily. Aga sub-subfamily. As to expression, expressed by the venom gland.

It localises to the secreted. In terms of biological role, insecticidal neurotoxin that modulates the insect Nav channel (DmNaV1/tipE (para/tipE)) in a unique manner, with both the activation and inactivation processes being affected. The voltage dependence of activation is shifted toward more hyperpolarized potentials (analogous to site 4 toxins) and a non-inactivating persistent sodium current is induced (site 3-like action). Interestingly, both effects take place in a voltage-dependent manner, producing a bell-shaped curve between -80 and 0 mV. In vivo, induces an irreversible spastic paralysis when injected into insects. This Agelena orientalis (Funnel-web spider) protein is U3-agatoxin-Ao1f.